The sequence spans 354 residues: Guanine nucleotide-binding protein G(i) subunit alpha-1 (354 aa).

Gly-2 is lipidated: N-myristoyl glycine. Cys-3 carries S-palmitoyl cysteine lipidation. One can recognise a G-alpha domain in the interval 32–354; it reads REVKLLLLGA…KNNLKDCGLF (323 aa). Positions 35–48 are G1 motif; that stretch reads KLLLLGAGESGKST. Residues 43–48, 150–151, and 175–178 contribute to the GTP site; these read ESGKST, DS, and LRTR. Residue Ser-47 participates in Mg(2+) binding. A G2 motif region spans residues 173–181; sequence DVLRTRVKT. Residue Thr-181 coordinates Mg(2+). The tract at residues 196 to 205 is G3 motif; that stretch reads FKMFDVGGQR. GTP is bound by residues 200–204, 269–272, and Ala-326; these read DVGGQ and NKKD. Residues 265–272 form a G4 motif region; sequence ILFLNKKD. The G5 motif stretch occupies residues 324–329; that stretch reads TCATDT.

The protein belongs to the G-alpha family. G(i/o/t/z) subfamily. In terms of assembly, heterotrimeric G proteins are composed of 3 units; alpha, beta and gamma. The alpha chain contains the guanine nucleotide binding site. Part of a spindle orientation complex at least composed of GNAI1, GPSM2 and NUMA1. Identified in complex with the beta subunit GNB1 and the gamma subunit GNG1. Identified in complex with the beta subunit GNB1 and the gamma subunit GNG2. Component of the TAS2R14-GNAI1 complex, consisting of TAS2R14, GNAI1, GNB1 and GNG2; within the complex interacts with TAS2R14; this complex plays a role in the perception of bitterness. GTP binding causes dissociation of the heterotrimer, liberating the individual subunits so that they can interact with downstream effector proteins. Interacts (GDP-bound form) with GPSM1; this inhibits guanine nucleotide exchange and GTP binding. Interacts (GDP-bound form) with GPSM2 (via GoLoco domains); this inhibits guanine nucleotide exchange. Interacts with RGS10; this strongly enhances GTP hydrolysis. Interacts with RGS1 and RGS16; this strongly enhances GTPase activity. Interacts with RGS4. Interacts with RGS12. Interacts (via active GTP- or inactive GDP-bound forms) with RGS14 (via RGS and GoLoco domains). Interacts with RGS3, RGS6, RGS7, RGS8, RGS17, RGS18 and RGS20 (in vitro). Interacts (GDP-bound form) with RIC8A (via C-terminus); promoting GNAI1 folding and association with the plasma membrane. Interacts (inactive GDP-bound form) with NUCB1 (via GBA motif); the interaction leads to activation of GNAI1. Interacts (inactive GDP-bound form) with CCDC88C/DAPLE (via GBA motif); the interaction leads to activation of GNAI1. Interacts (inactive GDP-bound form) with CCDC8A/GIV (via GBA motif). Post-translationally, myristoylation at Gly-2 is required for membrane anchoring before palmitoylation. Palmitoylation at Cys-3 varies with membrane lipid composition.

The protein resides in the nucleus. It localises to the cytoplasm. Its subcellular location is the cell membrane. The protein localises to the cytoskeleton. It is found in the microtubule organizing center. The protein resides in the centrosome. It localises to the cell cortex. Its subcellular location is the membrane. The catalysed reaction is GTP + H2O = GDP + phosphate + H(+). Guanine nucleotide-binding proteins (G proteins) function as transducers downstream of G protein-coupled receptors (GPCRs) in numerous signaling cascades. The alpha chain contains the guanine nucleotide binding site and alternates between an active, GTP-bound state and an inactive, GDP-bound state. Signaling by an activated GPCR promotes GDP release and GTP binding. The alpha subunit has a low GTPase activity that converts bound GTP to GDP, thereby terminating the signal. Both GDP release and GTP hydrolysis are modulated by numerous regulatory proteins. Signaling is mediated via effector proteins, such as adenylate cyclase. Inhibits adenylate cyclase activity of ADCY1, ADCY5 and ADCY6, leading to decreased intracellular cAMP levels. The inactive GDP-bound form prevents the association of RGS14 with centrosomes and is required for the translocation of RGS14 from the cytoplasm to the plasma membrane. Required for normal cytokinesis during mitosis. Required for cortical dynein-dynactin complex recruitment during metaphase. This Bos taurus (Bovine) protein is Guanine nucleotide-binding protein G(i) subunit alpha-1 (GNAI1).